Reading from the N-terminus, the 424-residue chain is Glutamyl-tRNA reductase (424 aa).

Substrate-binding positions include 49 to 52 (TCNR), Ser-105, 110 to 112 (EPQ), and Gln-116. Cys-50 functions as the Nucleophile in the catalytic mechanism. 185 to 190 (GSGETA) is an NADP(+) binding site.

It belongs to the glutamyl-tRNA reductase family. As to quaternary structure, homodimer.

It catalyses the reaction (S)-4-amino-5-oxopentanoate + tRNA(Glu) + NADP(+) = L-glutamyl-tRNA(Glu) + NADPH + H(+). The protein operates within porphyrin-containing compound metabolism; protoporphyrin-IX biosynthesis; 5-aminolevulinate from L-glutamyl-tRNA(Glu): step 1/2. Catalyzes the NADPH-dependent reduction of glutamyl-tRNA(Glu) to glutamate 1-semialdehyde (GSA). This Legionella pneumophila (strain Corby) protein is Glutamyl-tRNA reductase.